The chain runs to 86 residues: Large ribosomal subunit protein uL24c (86 aa).

This sequence belongs to the universal ribosomal protein uL24 family. As to quaternary structure, part of the 50S ribosomal subunit.

The protein localises to the plastid. The protein resides in the chloroplast. Its function is as follows. One of two assembly initiator proteins, it binds directly to the 5'-end of the 23S rRNA, where it nucleates assembly of the 50S subunit. The sequence is that of Large ribosomal subunit protein uL24c (rpl24) from Heterosigma akashiwo (strain NIES-293 / 8280G21-1).